The primary structure comprises 76 residues: uncharacterized protein (76 aa).

The required for interaction with PPP3CA stretch occupies residues 36–41 (PDIIIT). A phosphothreonine mark is found at T44 and T46.

Interacts (via PxIxIT motif, when phosphorylated on Thr-44) with PPP3CA. In terms of tissue distribution, not expressed in pancreatic duct cells (at protein level). Abundantly expressed in the pancreas and weakly expressed in the thyroid. As to expression, not expressed in pancreatic duct cells (at protein level). Abundantly expressed in the lymph node and weakly expressed in the stomach, trachea and bone marrow.

This is an uncharacterized protein from Homo sapiens (Human).